The sequence spans 314 residues: Endolytic peptidoglycan transglycosylase RlpA (314 aa).

Residues 1 to 19 (MGWALKKVCFLGVIFLISA) form the signal peptide. Cys20 carries N-palmitoyl cysteine lipidation. Cys20 carries the S-diacylglycerol cysteine lipid modification. The SPOR domain occupies 241-314 (SVSGGKFSLQ…YNQNAVLTRE (74 aa)).

The protein belongs to the RlpA family.

It is found in the cell membrane. Its function is as follows. Lytic transglycosylase with a strong preference for naked glycan strands that lack stem peptides. This chain is Endolytic peptidoglycan transglycosylase RlpA, found in Helicobacter pylori (strain J99 / ATCC 700824) (Campylobacter pylori J99).